Consider the following 593-residue polypeptide: UvrABC system protein C (593 aa).

The region spanning 14–91 is the GIY-YIG domain; that stretch reads DSPGCYLHKD…IQENMPKYNI (78 aa). The UVR domain occupies 196–231; sequence NKIVNGLTEKMKSAAMTMEFERAAEYRDLIEAISLL.

The protein belongs to the UvrC family. In terms of assembly, interacts with UvrB in an incision complex.

The protein localises to the cytoplasm. Its function is as follows. The UvrABC repair system catalyzes the recognition and processing of DNA lesions. UvrC both incises the 5' and 3' sides of the lesion. The N-terminal half is responsible for the 3' incision and the C-terminal half is responsible for the 5' incision. In Streptococcus agalactiae serotype III (strain NEM316), this protein is UvrABC system protein C.